The following is a 230-amino-acid chain: Thiamine-triphosphatase (230 aa).

Position 2 is an N-acetylalanine (A2). The CYTH domain occupies 5–201 (LIEVERKFLP…AKLIVYLQRF (197 aa)). Residues E7 and E9 each contribute to the Mg(2+) site. Substrate is bound by residues K11, R55, R57, K65, and R125. Residues D145, E157, and E159 each coordinate Mg(2+). A substrate-binding site is contributed by E157. Residue K193 coordinates substrate.

Belongs to the ThTPase family. As to quaternary structure, monomer. Mg(2+) is required as a cofactor.

The protein resides in the cytoplasm. The catalysed reaction is thiamine triphosphate + H2O = thiamine diphosphate + phosphate + H(+). Its function is as follows. Hydrolase highly specific for thiamine triphosphate (ThTP). The sequence is that of Thiamine-triphosphatase (THTPA) from Macaca fascicularis (Crab-eating macaque).